A 189-amino-acid polypeptide reads, in one-letter code: Crossover junction endodeoxyribonuclease RuvC (189 aa).

Catalysis depends on residues Asp-7, Glu-68, and Asp-141. Mg(2+) contacts are provided by Asp-7, Glu-68, and Asp-141.

Belongs to the RuvC family. Homodimer which binds Holliday junction (HJ) DNA. The HJ becomes 2-fold symmetrical on binding to RuvC with unstacked arms; it has a different conformation from HJ DNA in complex with RuvA. In the full resolvosome a probable DNA-RuvA(4)-RuvB(12)-RuvC(2) complex forms which resolves the HJ. Requires Mg(2+) as cofactor.

The protein localises to the cytoplasm. The catalysed reaction is Endonucleolytic cleavage at a junction such as a reciprocal single-stranded crossover between two homologous DNA duplexes (Holliday junction).. The RuvA-RuvB-RuvC complex processes Holliday junction (HJ) DNA during genetic recombination and DNA repair. Endonuclease that resolves HJ intermediates. Cleaves cruciform DNA by making single-stranded nicks across the HJ at symmetrical positions within the homologous arms, yielding a 5'-phosphate and a 3'-hydroxyl group; requires a central core of homology in the junction. The consensus cleavage sequence is 5'-(A/T)TT(C/G)-3'. Cleavage occurs on the 3'-side of the TT dinucleotide at the point of strand exchange. HJ branch migration catalyzed by RuvA-RuvB allows RuvC to scan DNA until it finds its consensus sequence, where it cleaves and resolves the cruciform DNA. This chain is Crossover junction endodeoxyribonuclease RuvC, found in Nocardia farcinica (strain IFM 10152).